The chain runs to 192 residues: Der GTPase-activating protein YihI (192 aa).

Positions 1–12 (MSAKQPNRKPAG) are enriched in basic residues. 2 disordered regions span residues 1-87 (MSAK…IKEK) and 145-192 (DTDD…PKKK). Residues 13–26 (KRKESDASAQEGRE) show a composition bias toward basic and acidic residues. A compositionally biased stretch (basic residues) spans 27-36 (RKRAAKRKGL). Positions 145 to 172 (DTDDDEDEADFDEADFDEPGQPASEEEL) are enriched in acidic residues. Basic and acidic residues predominate over residues 183–192 (PEPKPEPKKK).

It belongs to the YihI family. As to quaternary structure, interacts with Der.

A GTPase-activating protein (GAP) that modifies Der/EngA GTPase function. May play a role in ribosome biogenesis. In Aeromonas hydrophila subsp. hydrophila (strain ATCC 7966 / DSM 30187 / BCRC 13018 / CCUG 14551 / JCM 1027 / KCTC 2358 / NCIMB 9240 / NCTC 8049), this protein is Der GTPase-activating protein YihI.